The chain runs to 421 residues: Protein FAM110C (421 aa).

3 disordered regions span residues 1–36 (MRALPTLDSLARMRPPLGDPRAAEDTLTPRPANKSA), 51–80 (TLGSSRGPVSEHRVPEAPGVQHRNPIPSAL), and 141–266 (TTRV…PASM). 3 stretches are compositionally biased toward basic and acidic residues: residues 143–155 (RVADEDKTTKETE), 185–202 (PAEKTRVANEDKTTKETE), and 232–249 (PAEKTRVANEDKTTKETE). At S350 the chain carries Phosphoserine.

This sequence belongs to the FAM110 family. As to quaternary structure, interacts with AKT1; the interaction is transient and follows AKT1 activation. Interacts with PPP2CA and alpha-tubulin.

It localises to the cytoplasm. It is found in the cytoskeleton. The protein resides in the microtubule organizing center. Its subcellular location is the centrosome. The protein localises to the spindle pole. It localises to the nucleus. May play a role in microtubule organization. May play a role in cell spreading and cell migration of epithelial cells; the function may involve the AKT1 signaling pathway. This is Protein FAM110C (Fam110c) from Mus musculus (Mouse).